A 331-amino-acid chain; its full sequence is Fructose-1,6-bisphosphatase class 1 (331 aa).

Mg(2+) contacts are provided by Glu88, Asp108, Leu110, and Asp111. Substrate is bound by residues 111-114 (DGSS) and Asn201. Residue Glu273 coordinates Mg(2+).

This sequence belongs to the FBPase class 1 family. In terms of assembly, homotetramer. The cofactor is Mg(2+).

The protein localises to the cytoplasm. The enzyme catalyses beta-D-fructose 1,6-bisphosphate + H2O = beta-D-fructose 6-phosphate + phosphate. It participates in carbohydrate biosynthesis; gluconeogenesis. The sequence is that of Fructose-1,6-bisphosphatase class 1 from Methylobacillus flagellatus (strain ATCC 51484 / DSM 6875 / VKM B-1610 / KT).